Consider the following 284-residue polypeptide: Four and a half LIM domains protein 5 (284 aa).

The C4-type zinc-finger motif lies at 8–32 (CQYCTASLLGKKYVLKDDSPYCVTC). 4 consecutive LIM zinc-binding domains span residues 39–100 (NYCE…ECSS), 101–160 (KCFH…KEFA), 161–220 (HYCN…LYAN), and 223–283 (VACS…MDTD).

As to quaternary structure, interacts with CREM (via the third LIM domain). Interacts (via second LIM domain) with SPAG8. As to expression, testis-specific (at protein level).

It localises to the nucleus. May be involved in the regulation of spermatogenesis. Stimulates CREM transcriptional activity in a phosphorylation-independent manner. The polypeptide is Four and a half LIM domains protein 5 (FHL5) (Homo sapiens (Human)).